A 189-amino-acid polypeptide reads, in one-letter code: Large ribosomal subunit protein uL5 (189 aa).

The protein belongs to the universal ribosomal protein uL5 family. As to quaternary structure, part of the 50S ribosomal subunit; part of the 5S rRNA/L5/L18/L25 subcomplex. Contacts the 5S rRNA and the P site tRNA. Forms a bridge to the 30S subunit in the 70S ribosome.

Functionally, this is one of the proteins that bind and probably mediate the attachment of the 5S RNA into the large ribosomal subunit, where it forms part of the central protuberance. In the 70S ribosome it contacts protein S13 of the 30S subunit (bridge B1b), connecting the 2 subunits; this bridge is implicated in subunit movement. Contacts the P site tRNA; the 5S rRNA and some of its associated proteins might help stabilize positioning of ribosome-bound tRNAs. The chain is Large ribosomal subunit protein uL5 from Salinispora tropica (strain ATCC BAA-916 / DSM 44818 / JCM 13857 / NBRC 105044 / CNB-440).